The chain runs to 471 residues: Ribosomal protein uS12 methylthiotransferase RimO (471 aa).

Positions 2-122 (IKVSLISLGC…VAPIIQEIYA (121 aa)) constitute an MTTase N-terminal domain. Residues Cys11, Cys47, Cys84, Cys166, Cys170, and Cys173 each coordinate [4Fe-4S] cluster. The Radical SAM core domain occupies 152 to 395 (LTPKHFAYVK…MALQKQIAAD (244 aa)). The 61-residue stretch at 398 to 458 (KTYVGRTLRV…DYDLLALPPG (61 aa)) folds into the TRAM domain.

The protein belongs to the methylthiotransferase family. RimO subfamily. [4Fe-4S] cluster is required as a cofactor.

Its subcellular location is the cytoplasm. The enzyme catalyses L-aspartate(89)-[ribosomal protein uS12]-hydrogen + (sulfur carrier)-SH + AH2 + 2 S-adenosyl-L-methionine = 3-methylsulfanyl-L-aspartate(89)-[ribosomal protein uS12]-hydrogen + (sulfur carrier)-H + 5'-deoxyadenosine + L-methionine + A + S-adenosyl-L-homocysteine + 2 H(+). Its function is as follows. Catalyzes the methylthiolation of an aspartic acid residue of ribosomal protein uS12. This Opitutus terrae (strain DSM 11246 / JCM 15787 / PB90-1) protein is Ribosomal protein uS12 methylthiotransferase RimO.